Consider the following 451-residue polypeptide: Phosphoglucosamine mutase (451 aa).

Ser-103 (phosphoserine intermediate) is an active-site residue. Residues Ser-103, Asp-243, Asp-245, and Asp-247 each coordinate Mg(2+). Ser-103 is modified (phosphoserine).

It belongs to the phosphohexose mutase family. It depends on Mg(2+) as a cofactor. In terms of processing, activated by phosphorylation.

The catalysed reaction is alpha-D-glucosamine 1-phosphate = D-glucosamine 6-phosphate. Its function is as follows. Catalyzes the conversion of glucosamine-6-phosphate to glucosamine-1-phosphate. This Lactobacillus gasseri (strain ATCC 33323 / DSM 20243 / BCRC 14619 / CIP 102991 / JCM 1131 / KCTC 3163 / NCIMB 11718 / NCTC 13722 / AM63) protein is Phosphoglucosamine mutase.